The following is a 505-amino-acid chain: ATP synthase subunit alpha, chloroplastic (505 aa).

Glycine 170–threonine 177 contacts ATP.

The protein belongs to the ATPase alpha/beta chains family. As to quaternary structure, F-type ATPases have 2 components, CF(1) - the catalytic core - and CF(0) - the membrane proton channel. CF(1) has five subunits: alpha(3), beta(3), gamma(1), delta(1), epsilon(1). CF(0) has four main subunits: a, b, b' and c.

It is found in the plastid. The protein resides in the chloroplast thylakoid membrane. The enzyme catalyses ATP + H2O + 4 H(+)(in) = ADP + phosphate + 5 H(+)(out). Its function is as follows. Produces ATP from ADP in the presence of a proton gradient across the membrane. The alpha chain is a regulatory subunit. This Mesostigma viride (Green alga) protein is ATP synthase subunit alpha, chloroplastic.